The primary structure comprises 157 residues: Ribosome-binding factor A (157 aa).

The tract at residues 124–157 is disordered; it reads SAGAQFAGDADPYRKPESDDESDTAAKTDGDAAE. Basic and acidic residues predominate over residues 147–157; it reads TAAKTDGDAAE.

Belongs to the RbfA family. In terms of assembly, monomer. Binds 30S ribosomal subunits, but not 50S ribosomal subunits or 70S ribosomes.

It localises to the cytoplasm. Its function is as follows. One of several proteins that assist in the late maturation steps of the functional core of the 30S ribosomal subunit. Associates with free 30S ribosomal subunits (but not with 30S subunits that are part of 70S ribosomes or polysomes). Required for efficient processing of 16S rRNA. May interact with the 5'-terminal helix region of 16S rRNA. The sequence is that of Ribosome-binding factor A from Streptomyces avermitilis (strain ATCC 31267 / DSM 46492 / JCM 5070 / NBRC 14893 / NCIMB 12804 / NRRL 8165 / MA-4680).